The primary structure comprises 270 residues: Abhydrolase domain-containing protein C22H12.03 (270 aa).

Residues 21–257 enclose the AB hydrolase-1 domain; that stretch reads PPVLIFHGLL…CGHWVHFEKP (237 aa). Catalysis depends on charge relay system residues serine 95, glutamate 190, and histidine 250.

It belongs to the AB hydrolase superfamily.

The protein resides in the mitochondrion. The sequence is that of Abhydrolase domain-containing protein C22H12.03 from Schizosaccharomyces pombe (strain 972 / ATCC 24843) (Fission yeast).